We begin with the raw amino-acid sequence, 240 residues long: Ribosomal RNA large subunit methyltransferase E (240 aa).

The disordered stretch occupies residues 1–28; the sequence is MSSSPRSPDARPLKVRVKSARTRSSSSQ. 5 residues coordinate S-adenosyl-L-methionine: Gly80, Trp82, Asp103, Asp119, and Asp143. Lys183 acts as the Proton acceptor in catalysis.

This sequence belongs to the class I-like SAM-binding methyltransferase superfamily. RNA methyltransferase RlmE family.

The protein localises to the cytoplasm. The catalysed reaction is uridine(2552) in 23S rRNA + S-adenosyl-L-methionine = 2'-O-methyluridine(2552) in 23S rRNA + S-adenosyl-L-homocysteine + H(+). Specifically methylates the uridine in position 2552 of 23S rRNA at the 2'-O position of the ribose in the fully assembled 50S ribosomal subunit. This Azorhizobium caulinodans (strain ATCC 43989 / DSM 5975 / JCM 20966 / LMG 6465 / NBRC 14845 / NCIMB 13405 / ORS 571) protein is Ribosomal RNA large subunit methyltransferase E.